The primary structure comprises 481 residues: Proline--tRNA ligase (481 aa).

Belongs to the class-II aminoacyl-tRNA synthetase family. ProS type 3 subfamily. Homodimer.

The protein localises to the cytoplasm. The catalysed reaction is tRNA(Pro) + L-proline + ATP = L-prolyl-tRNA(Pro) + AMP + diphosphate. Functionally, catalyzes the attachment of proline to tRNA(Pro) in a two-step reaction: proline is first activated by ATP to form Pro-AMP and then transferred to the acceptor end of tRNA(Pro). The protein is Proline--tRNA ligase of Chlorobium chlorochromatii (strain CaD3).